The chain runs to 169 residues: Protein AIG2 B (169 aa).

15–20 is a binding site for substrate; it reads YGSFQE. The active-site Proton acceptor is Glu83.

The protein belongs to the gamma-glutamylcyclotransferase family. In terms of tissue distribution, expressed in roots, leaves and stems.

Functionally, putative gamma-glutamylcyclotransferase. The sequence is that of Protein AIG2 B from Arabidopsis thaliana (Mouse-ear cress).